The sequence spans 342 residues: S-adenosylmethionine:tRNA ribosyltransferase-isomerase (342 aa).

This sequence belongs to the QueA family. As to quaternary structure, monomer.

It localises to the cytoplasm. The catalysed reaction is 7-aminomethyl-7-carbaguanosine(34) in tRNA + S-adenosyl-L-methionine = epoxyqueuosine(34) in tRNA + adenine + L-methionine + 2 H(+). It participates in tRNA modification; tRNA-queuosine biosynthesis. Its function is as follows. Transfers and isomerizes the ribose moiety from AdoMet to the 7-aminomethyl group of 7-deazaguanine (preQ1-tRNA) to give epoxyqueuosine (oQ-tRNA). The chain is S-adenosylmethionine:tRNA ribosyltransferase-isomerase from Listeria welshimeri serovar 6b (strain ATCC 35897 / DSM 20650 / CCUG 15529 / CIP 8149 / NCTC 11857 / SLCC 5334 / V8).